We begin with the raw amino-acid sequence, 373 residues long: tRNA-specific 2-thiouridylase MnmA (373 aa).

ATP contacts are provided by residues 12–19 (GMSGGVDS) and Met38. The interaction with target base in tRNA stretch occupies residues 98–100 (NPD). The Nucleophile role is filled by Cys103. Cysteines 103 and 200 form a disulfide. Position 127 (Gly127) interacts with ATP. Positions 150 to 152 (KDQ) are interaction with tRNA. Catalysis depends on Cys200, which acts as the Cysteine persulfide intermediate. The interval 312-313 (RY) is interaction with tRNA.

The protein belongs to the MnmA/TRMU family.

Its subcellular location is the cytoplasm. The catalysed reaction is S-sulfanyl-L-cysteinyl-[protein] + uridine(34) in tRNA + AH2 + ATP = 2-thiouridine(34) in tRNA + L-cysteinyl-[protein] + A + AMP + diphosphate + H(+). Functionally, catalyzes the 2-thiolation of uridine at the wobble position (U34) of tRNA, leading to the formation of s(2)U34. The sequence is that of tRNA-specific 2-thiouridylase MnmA from Streptococcus pneumoniae (strain 70585).